The primary structure comprises 49 residues: Large ribosomal subunit protein bL33C (49 aa).

The protein belongs to the bacterial ribosomal protein bL33 family.

The protein is Large ribosomal subunit protein bL33C of Lactococcus lactis subsp. cremoris (strain MG1363).